Reading from the N-terminus, the 80-residue chain is RNA-binding protein Hfq (80 aa).

The Sm domain occupies 10-69 (DPFLNVLRKEHIPVSIYLVNGIKLQGHIDSFDQYVVLLRNSVTQMVYKHAISTIVPGKAV).

It belongs to the Hfq family. Homohexamer.

Its function is as follows. RNA chaperone that binds small regulatory RNA (sRNAs) and mRNAs to facilitate mRNA translational regulation in response to envelope stress, environmental stress and changes in metabolite concentrations. Also binds with high specificity to tRNAs. The chain is RNA-binding protein Hfq from Nitrosomonas eutropha (strain DSM 101675 / C91 / Nm57).